The primary structure comprises 505 residues: 2,3-bisphosphoglycerate-independent phosphoglycerate mutase (505 aa).

Mn(2+) is bound by residues Asp12 and Ser62. Residue Ser62 is the Phosphoserine intermediate of the active site. Substrate-binding positions include His123, 153–154, Arg185, Arg191, 257–260, and Lys330; these read RD and RPDR. Mn(2+) contacts are provided by Asp397, His401, Asp438, His439, and His456.

The protein belongs to the BPG-independent phosphoglycerate mutase family. Monomer. Requires Mn(2+) as cofactor.

It catalyses the reaction (2R)-2-phosphoglycerate = (2R)-3-phosphoglycerate. The protein operates within carbohydrate degradation; glycolysis; pyruvate from D-glyceraldehyde 3-phosphate: step 3/5. Catalyzes the interconversion of 2-phosphoglycerate and 3-phosphoglycerate. The polypeptide is 2,3-bisphosphoglycerate-independent phosphoglycerate mutase (Staphylococcus epidermidis (strain ATCC 35984 / DSM 28319 / BCRC 17069 / CCUG 31568 / BM 3577 / RP62A)).